A 94-amino-acid polypeptide reads, in one-letter code: MPISTAEVEHVALLARLKLSPEEKTAYTEQLNAILEYMDKLNALDTRDVEPTAHVLPLRNVFRDDCARPGLPREKALQGAPEVSEGQFKVPRVV.

Residues 72-94 form a disordered region; the sequence is PREKALQGAPEVSEGQFKVPRVV.

It belongs to the GatC family. As to quaternary structure, heterotrimer of A, B and C subunits.

It carries out the reaction L-glutamyl-tRNA(Gln) + L-glutamine + ATP + H2O = L-glutaminyl-tRNA(Gln) + L-glutamate + ADP + phosphate + H(+). It catalyses the reaction L-aspartyl-tRNA(Asn) + L-glutamine + ATP + H2O = L-asparaginyl-tRNA(Asn) + L-glutamate + ADP + phosphate + 2 H(+). In terms of biological role, allows the formation of correctly charged Asn-tRNA(Asn) or Gln-tRNA(Gln) through the transamidation of misacylated Asp-tRNA(Asn) or Glu-tRNA(Gln) in organisms which lack either or both of asparaginyl-tRNA or glutaminyl-tRNA synthetases. The reaction takes place in the presence of glutamine and ATP through an activated phospho-Asp-tRNA(Asn) or phospho-Glu-tRNA(Gln). The sequence is that of Aspartyl/glutamyl-tRNA(Asn/Gln) amidotransferase subunit C from Moorella thermoacetica (strain ATCC 39073 / JCM 9320).